The following is an 842-amino-acid chain: GPI ethanolamine phosphate transferase 2 (842 aa).

N186 carries an N-linked (GlcNAc...) asparagine glycan. The helical transmembrane segment at 409–429 (YNYPLLFIGCFLSIVITGTIY) threads the bilayer. N441 carries an N-linked (GlcNAc...) asparagine glycan. The next 2 membrane-spanning stretches (helical) occupy residues 442–462 (TSIL…SSFI) and 468–488 (FWWW…NFSS). N-linked (GlcNAc...) asparagine glycosylation occurs at N506. A helical membrane pass occupies residues 524 to 544 (GNIDALWWLNLITVTVVGLNL). An N-linked (GlcNAc...) asparagine glycan is attached at N551. Residues 554–574 (VSLLGFSDLLSMGLLSMITFL) traverse the membrane as a helical segment. The N-linked (GlcNAc...) asparagine glycan is linked to N578. 3 helical membrane-spanning segments follow: residues 615 to 635 (IHTA…AVLV), 698 to 718 (YLLA…QSGG), and 740 to 760 (IYVV…YWSF). The N-linked (GlcNAc...) asparagine glycan is linked to N771. 2 helical membrane passes run 783–803 (YPFI…CIIL) and 821–841 (MVWT…LLLL).

The protein belongs to the PIGG/PIGN/PIGO family. PIGG subfamily.

It localises to the endoplasmic reticulum membrane. It functions in the pathway glycolipid biosynthesis; glycosylphosphatidylinositol-anchor biosynthesis. Functionally, ethanolamine phosphate transferase involved in glycosylphosphatidylinositol-anchor biosynthesis. Transfers ethanolamine phosphate to the GPI second mannose. This Candida glabrata (strain ATCC 2001 / BCRC 20586 / JCM 3761 / NBRC 0622 / NRRL Y-65 / CBS 138) (Yeast) protein is GPI ethanolamine phosphate transferase 2 (LAS21).